We begin with the raw amino-acid sequence, 146 residues long: uncharacterized protein (146 aa).

It belongs to the BlaI transcriptional regulatory family.

This is an uncharacterized protein from Latilactobacillus sakei (Lactobacillus sakei).